The primary structure comprises 251 residues: Hydroxyacylglutathione hydrolase (251 aa).

Zn(2+) is bound by residues histidine 59, histidine 61, aspartate 63, histidine 64, histidine 118, aspartate 141, and histidine 179.

Belongs to the metallo-beta-lactamase superfamily. Glyoxalase II family. Monomer. Zn(2+) serves as cofactor.

It carries out the reaction an S-(2-hydroxyacyl)glutathione + H2O = a 2-hydroxy carboxylate + glutathione + H(+). It participates in secondary metabolite metabolism; methylglyoxal degradation; (R)-lactate from methylglyoxal: step 2/2. Functionally, thiolesterase that catalyzes the hydrolysis of S-D-lactoyl-glutathione to form glutathione and D-lactic acid. The sequence is that of Hydroxyacylglutathione hydrolase from Prochlorococcus marinus (strain NATL2A).